Consider the following 256-residue polypeptide: Ubiquinone/menaquinone biosynthesis C-methyltransferase UbiE (256 aa).

Polar residues predominate over residues 1–19; sequence MQNRSSSPDSSSAGNTHFG. The tract at residues 1 to 24 is disordered; sequence MQNRSSSPDSSSAGNTHFGFQSVP. Residues Thr-81, Asp-102, and 128 to 129 contribute to the S-adenosyl-L-methionine site; that span reads DA.

This sequence belongs to the class I-like SAM-binding methyltransferase superfamily. MenG/UbiE family.

It catalyses the reaction a 2-demethylmenaquinol + S-adenosyl-L-methionine = a menaquinol + S-adenosyl-L-homocysteine + H(+). The enzyme catalyses a 2-methoxy-6-(all-trans-polyprenyl)benzene-1,4-diol + S-adenosyl-L-methionine = a 5-methoxy-2-methyl-3-(all-trans-polyprenyl)benzene-1,4-diol + S-adenosyl-L-homocysteine + H(+). The protein operates within quinol/quinone metabolism; menaquinone biosynthesis; menaquinol from 1,4-dihydroxy-2-naphthoate: step 2/2. It participates in cofactor biosynthesis; ubiquinone biosynthesis. Methyltransferase required for the conversion of demethylmenaquinol (DMKH2) to menaquinol (MKH2) and the conversion of 2-polyprenyl-6-methoxy-1,4-benzoquinol (DDMQH2) to 2-polyprenyl-3-methyl-6-methoxy-1,4-benzoquinol (DMQH2). The sequence is that of Ubiquinone/menaquinone biosynthesis C-methyltransferase UbiE from Bordetella avium (strain 197N).